The following is a 505-amino-acid chain: Alpha-internexin (505 aa).

Residues Met-1–Tyr-87 form a head region. Ser-72 is subject to Phosphoserine. The tract at residues Lys-88 to Leu-129 is coil 1A. Residues Glu-94–Phe-407 form the IF rod domain. The linker 1 stretch occupies residues Arg-130–Leu-142. Residues Phe-143–Leu-238 are coil 1B. Position 219 is a phosphoserine (Ser-219). The linker 2 stretch occupies residues Leu-239–Thr-262. The segment at Ser-263–Ser-408 is coil 2. Residue Lys-290 is modified to N6-acetyllysine. 3 positions are modified to phosphoserine: Ser-335, Ser-474, and Ser-502. The segment at Thr-409 to Met-505 is tail. The disordered stretch occupies residues Lys-438–Met-505. A compositionally biased stretch (low complexity) spans Glu-495–Met-505.

The protein belongs to the intermediate filament family. In terms of assembly, forms homodimers (in vitro). Forms heterodimers with NEFL, NEFM or NEFH (in vitro). Post-translationally, O-glycosylated. In terms of tissue distribution, expressed in the dorsal root ganglion neurons (at protein level).

Its function is as follows. Class-IV neuronal intermediate filament that is able to self-assemble. It is involved in the morphogenesis of neurons. It may form an independent structural network without the involvement of other neurofilaments or it may cooperate with NEFL to form the filamentous backbone to which NEFM and NEFH attach to form the cross-bridges. May also cooperate with the neuronal intermediate filament protein PRPH to form filamentous networks. The sequence is that of Alpha-internexin (Ina) from Rattus norvegicus (Rat).